Consider the following 299-residue polypeptide: Probable lipid kinase YegS (299 aa).

Residues 2–133 (AEFPASLLIL…IDMAQVNKQT (132 aa)) enclose the DAGKc domain. Residues Thr40, 66–72 (GDGTINE), and Thr95 contribute to the ATP site. Mg(2+) contacts are provided by Leu215, Asp218, and Leu220. Glu271 acts as the Proton acceptor in catalysis.

It belongs to the diacylglycerol/lipid kinase family. YegS lipid kinase subfamily. Mg(2+) serves as cofactor. Ca(2+) is required as a cofactor.

The protein localises to the cytoplasm. Probably phosphorylates lipids; the in vivo substrate is unknown. This is Probable lipid kinase YegS from Shigella flexneri.